Here is a 667-residue protein sequence, read N- to C-terminus: E3 ubiquitin-protein ligase RNF6 (667 aa).

7 disordered regions span residues 1 to 25 (MDPS…RRWQ), 75 to 100 (KEQL…RAHS), 116 to 216 (GNVT…QGSF), 295 to 355 (FSSR…TPLS), 396 to 419 (ETRD…STVE), 507 to 532 (GDAA…GAEM), and 537 to 556 (EPAP…QLGR). Residues 79-90 (ASQPGSDSAASD) show a composition bias toward low complexity. Positions 116-139 (GNVTRSGQNGNQSWRAVSRTNPNS) are enriched in polar residues. Residues 150 to 163 (INPDNRGSEMHGED) show a composition bias toward basic and acidic residues. Residues 191–200 (SQTSMSSSGP) are compositionally biased toward low complexity. Residues 296–327 (SSRSRSPIQRQNGTVHHNSQRQGRPVQQTGRN) are compositionally biased toward polar residues. Positions 516 to 530 (HGRASSQASQAQDGA) are enriched in low complexity. S559 is modified (phosphoserine). The RING-type; atypical zinc-finger motif lies at 614-655 (CSVCISDYVAGNKLRQLPCLHEFHIHCIDRWLSENCTCPVCR).

The protein belongs to the RNF12 family. As to expression, widely expressed with higher expression in the testis in both germ cells and Sertoli cells.

The protein localises to the nucleus. Its subcellular location is the cytoplasm. It localises to the cell projection. It is found in the axon. The protein resides in the PML body. It carries out the reaction S-ubiquitinyl-[E2 ubiquitin-conjugating enzyme]-L-cysteine + [acceptor protein]-L-lysine = [E2 ubiquitin-conjugating enzyme]-L-cysteine + N(6)-ubiquitinyl-[acceptor protein]-L-lysine.. It functions in the pathway protein modification; protein ubiquitination. E3 ubiquitin-protein ligase mediating 'Lys-48'-linked polyubiquitination of LIMK1 and its subsequent targeting to the proteasome for degradation. Negatively regulates axonal outgrowth through regulation of the LIMK1 turnover. Mediates 'Lys-6' and 'Lys-27'-linked polyubiquitination of AR/androgen receptor thereby modulating its transcriptional activity. May also bind DNA and function as a transcriptional regulator. Mediates polyubiquitination of QKI in macrophages, leading to its degradation. The chain is E3 ubiquitin-protein ligase RNF6 from Mus musculus (Mouse).